Here is a 258-residue protein sequence, read N- to C-terminus: MGGKMLRSVSELIYKVYARYLLGQINLNNLPGHVALIVDGNRRWARKEKRDRISDGHRAGAGKAVDFLHWCDELDINIVTLYLLSNDNLKNRNRQELNDLVQVICNLIAQVSKRWKVNHVGSCENLPELLGNSLEGVKSSTKTNRYSERSMTVNLAIGYSGRAEITEAVRKIVNTYPIGDLPEKITEEVISANLYTGGLSDPDLIIRTSGEQRLSDFMPWQSTHSEFYFLEALGPDLRKVDFLRAIRDFSIRRRSFGA.

Asp-39 is an active-site residue. A Mg(2+)-binding site is contributed by Asp-39. Substrate is bound by residues 40 to 43, Trp-44, Arg-52, His-57, and 85 to 87; these read GNRR and SND. Asn-88 functions as the Proton acceptor in the catalytic mechanism. Substrate is bound by residues Arg-92, Arg-207, and 213-215; that span reads RLS. Mg(2+) is bound at residue Glu-226.

The protein belongs to the UPP synthase family. Homodimer. Mg(2+) serves as cofactor.

Its function is as follows. Catalyzes the condensation of isopentenyl diphosphate (IPP) with allylic pyrophosphates generating different type of terpenoids. In Tropheryma whipplei (strain TW08/27) (Whipple's bacillus), this protein is Isoprenyl transferase 1.